Reading from the N-terminus, the 247-residue chain is Adenosylcobinamide-GDP ribazoletransferase (247 aa).

5 consecutive transmembrane segments (helical) span residues 34-54, 59-79, 113-133, 138-158, and 194-214; these read IITF…VFMV, CGAP…TGGF, GGLA…ELAL, ILAS…LLMY, and VLLP…AIFI.

The protein belongs to the CobS family. It depends on Mg(2+) as a cofactor.

It localises to the cell inner membrane. The catalysed reaction is alpha-ribazole + adenosylcob(III)inamide-GDP = adenosylcob(III)alamin + GMP + H(+). The enzyme catalyses alpha-ribazole 5'-phosphate + adenosylcob(III)inamide-GDP = adenosylcob(III)alamin 5'-phosphate + GMP + H(+). The protein operates within cofactor biosynthesis; adenosylcobalamin biosynthesis; adenosylcobalamin from cob(II)yrinate a,c-diamide: step 7/7. Its function is as follows. Joins adenosylcobinamide-GDP and alpha-ribazole to generate adenosylcobalamin (Ado-cobalamin). Also synthesizes adenosylcobalamin 5'-phosphate from adenosylcobinamide-GDP and alpha-ribazole 5'-phosphate. The protein is Adenosylcobinamide-GDP ribazoletransferase of Escherichia coli O45:K1 (strain S88 / ExPEC).